The following is a 186-amino-acid chain: TATA-box-binding protein B (186 aa).

Repeat copies occupy residues 10–86 and 101–179.

Belongs to the TBP family.

General factor that plays a role in the activation of archaeal genes transcribed by RNA polymerase. Binds specifically to the TATA box promoter element which lies close to the position of transcription initiation. The polypeptide is TATA-box-binding protein B (tbpB1) (Halobacterium salinarum (strain ATCC 700922 / JCM 11081 / NRC-1) (Halobacterium halobium)).